Consider the following 374-residue polypeptide: uncharacterized protein (374 aa).

29-36 (GSLNSGKS) serves as a coordination point for ATP.

It belongs to the archaeal ATPase family.

This is an uncharacterized protein from Methanocaldococcus jannaschii (strain ATCC 43067 / DSM 2661 / JAL-1 / JCM 10045 / NBRC 100440) (Methanococcus jannaschii).